Reading from the N-terminus, the 401-residue chain is Argininosuccinate synthase (401 aa).

9–17 is a binding site for ATP; the sequence is AYSGGLDTS. Position 87 (Tyr87) interacts with L-citrulline. Gly117 provides a ligand contact to ATP. Thr119, Asn123, and Asp124 together coordinate L-aspartate. Asn123 is an L-citrulline binding site. L-citrulline is bound by residues Arg127, Ser176, Ser185, Glu261, and Tyr273.

It belongs to the argininosuccinate synthase family. Type 1 subfamily. In terms of assembly, homotetramer.

Its subcellular location is the cytoplasm. The enzyme catalyses L-citrulline + L-aspartate + ATP = 2-(N(omega)-L-arginino)succinate + AMP + diphosphate + H(+). It participates in amino-acid biosynthesis; L-arginine biosynthesis; L-arginine from L-ornithine and carbamoyl phosphate: step 2/3. This chain is Argininosuccinate synthase, found in Prosthecochloris aestuarii (strain DSM 271 / SK 413).